A 325-amino-acid chain; its full sequence is Hydroxymethylglutaryl-CoA lyase, mitochondrial (325 aa).

A mitochondrion-targeting transit peptide spans methionine 1–glycine 27. One can recognise a Pyruvate carboxyltransferase domain in the interval valine 33–leucine 300. Arginine 41 contacts substrate. Aspartate 42 lines the a divalent metal cation pocket. Lysine 48 bears the N6-acetyllysine; alternate mark. Lysine 48 is modified (N6-succinyllysine; alternate). Lysine 111 is modified (N6-acetyllysine). Lysine 137 and lysine 179 each carry N6-acetyllysine; alternate. 2 positions are modified to N6-succinyllysine; alternate: lysine 137 and lysine 179. A divalent metal cation is bound by residues histidine 233 and histidine 235. Residue cysteine 266 is part of the active site. Asparagine 275 is a binding site for a divalent metal cation. The short motif at cysteine 323–leucine 325 is the Microbody targeting signal element. Lysine 324 is subject to N6-acetyllysine.

It belongs to the HMG-CoA lyase family. As to quaternary structure, homodimer; disulfide-linked. Can also form homotetramers. In suckling rat, highest levels in liver and in intestine. Lower levels in heart, kidney and cerebellum. Weak expression in brain cortex, medulla and midbrain. Levels decrease slightly during weaning.

Its subcellular location is the mitochondrion matrix. The protein localises to the peroxisome. The catalysed reaction is (3S)-3-hydroxy-3-methylglutaryl-CoA = acetoacetate + acetyl-CoA. Its pathway is metabolic intermediate metabolism; (S)-3-hydroxy-3-methylglutaryl-CoA degradation; acetoacetate from (S)-3-hydroxy-3-methylglutaryl-CoA: step 1/1. In terms of biological role, mitochondrial 3-hydroxy-3-methylglutaryl-CoA lyase that catalyzes a cation-dependent cleavage of (S)-3-hydroxy-3-methylglutaryl-CoA into acetyl-CoA and acetoacetate, a key step in ketogenesis. Terminal step in leucine catabolism. Ketone bodies (beta-hydroxybutyrate, acetoacetate and acetone) are essential as an alternative source of energy to glucose, as lipid precursors and as regulators of metabolism. In Rattus norvegicus (Rat), this protein is Hydroxymethylglutaryl-CoA lyase, mitochondrial (Hmgcl).